A 1311-amino-acid chain; its full sequence is Mitogen-activated protein kinase kinase kinase 19 (1311 aa).

Disordered stretches follow at residues 85-119 (PDPL…SPPD), 250-274 (PLSQ…PVEH), 330-363 (SVKE…YLSS), 396-472 (MTPA…NPEM), 486-508 (EGTS…PAQN), 576-607 (HRPH…KQAF), and 734-767 (SKDK…FLSS). The segment covering 250–261 (PLSQSAEFSSSK) has biased composition (polar residues). Composition is skewed to basic and acidic residues over residues 262–274 (NHQE…PVEH), 330–345 (SVKE…RDSG), and 450–464 (LEGH…KIPM). Positions 734-748 (SKDKGCKDMGGHTED) are enriched in basic and acidic residues. The region spanning 1044 to 1307 (WTKGEILGRG…ALQLLKHSFL (264 aa)) is the Protein kinase domain. Residues 1050 to 1058 (LGRGAYGTV) and Lys-1072 each bind ATP. Asp-1169 acts as the Proton acceptor in catalysis.

This sequence belongs to the protein kinase superfamily. STE Ser/Thr protein kinase family. STE20 subfamily.

It carries out the reaction L-seryl-[protein] + ATP = O-phospho-L-seryl-[protein] + ADP + H(+). The catalysed reaction is L-threonyl-[protein] + ATP = O-phospho-L-threonyl-[protein] + ADP + H(+). This chain is Mitogen-activated protein kinase kinase kinase 19 (Map3k19), found in Mus musculus (Mouse).